The primary structure comprises 712 residues: Protein TAPT1 homolog (712 aa).

Residues 1–21 (MNNVPSTSRENSRNPSESSSS) show a composition bias toward low complexity. 2 disordered regions span residues 1 to 22 (MNNVPSTSRENSRNPSESSSSI) and 44 to 66 (ITMSAPPSPATPRKIDFSAEIET). 7 helical membrane passes run 196–216 (FFYLFTFLPLRFLMSIFGALL), 222–242 (TSAETCDFLKVVIIVAASMLI), 305–325 (TCGHLIVAILYATLHSFLVIL), 379–399 (HIFALLFVVMIRNMTAVNWNI), 402–422 (FTEMIPDIIMVVGCEYFVDWL), 470–490 (GFIPIPLSIMIIRVLSQTFTL), and 497–517 (IIFGIGWLLVFAVKICNGVVM). Basic and acidic residues predominate over residues 596–619 (EIRRSTDRETAVSHLTARSDERTP). The interval 596-712 (EIRRSTDRET…MPEQGVQRIE (117 aa)) is disordered. Over residues 656–667 (TENNTNSNSEQA) the composition is skewed to polar residues. Low complexity predominate over residues 675–692 (TAAPVTSSASTNTNATSS).

The protein belongs to the TAPT1 family.

The protein resides in the membrane. This is Protein TAPT1 homolog from Caenorhabditis elegans.